Consider the following 3421-residue polypeptide: Large tegument protein deneddylase (3421 aa).

Positions 1–248 (MAQTLVPANK…SETYLSDEQY (248 aa)) are deubiquitination activity. Residues 19–238 (VVIGYRNQYD…ISATSLLYGI (220 aa)) form the Peptidase C76 domain. Catalysis depends on residues cysteine 39, aspartate 172, and histidine 174. The disordered stretch occupies residues 311–351 (QPTEKRVSLPKRRRPPWTPPTSSENLTTSGNTHTVAGRPSQ). Residues 332 to 344 (SSENLTTSGNTHT) are compositionally biased toward polar residues. The segment at 482–508 (LEQFITMIFNRLLSFLVENGARTRTDS) is interaction with inner tegument protein. 2 disordered regions span residues 2407 to 2442 (ESNP…PTGI) and 2479 to 3195 (SNAM…RKNI). The span at 2415–2432 (SHDSSQSLDVPSSPSSGS) shows a compositional bias: low complexity. Composition is skewed to pro residues over residues 2506 to 2516 (TLPPKAAPLPP), 2541 to 2556 (PSVP…PPLP), 2565 to 2577 (GPPP…PPLP), 2586 to 2598 (GPPP…PPLP), and 2607 to 2619 (GPPP…PPLP). Polar residues-rich tracts occupy residues 2620-2637 (QSTS…SGKT) and 2778-2787 (SDSNVTQSTK). Positions 2797-2857 (PAAAPAKSAA…SAAAPAAAPA (61 aa)) are enriched in low complexity. Positions 2869 to 2895 (KPAKDQAKDQAKDQAKDQAKDQAKDQA) are enriched in basic and acidic residues. Over residues 2953 to 2969 (LSASKNSHTTDAVSSDR) the composition is skewed to polar residues. 2 stretches are compositionally biased toward basic and acidic residues: residues 3023-3040 (RKSD…RRAF) and 3088-3097 (CSEEPKRPTG). The segment covering 3120 to 3146 (IPQNQNTSESPRTTSLKSPTRTVQSSM) has biased composition (polar residues). The span at 3171-3188 (PQPPPANQTPPPQEPPAP) shows a compositional bias: pro residues.

This sequence belongs to the herpesviridae large tegument protein family. As to quaternary structure, interacts with host CUL1 and CUL4A; these interactions inhibit the E3 ligase activity of cullins. Interacts with inner tegument protein. Interacts with capsid vertex specific component CVC2. Interacts with the major capsid protein/MCP.

Its subcellular location is the virion tegument. It localises to the host cytoplasm. The protein localises to the host nucleus. The catalysed reaction is Thiol-dependent hydrolysis of ester, thioester, amide, peptide and isopeptide bonds formed by the C-terminal Gly of ubiquitin (a 76-residue protein attached to proteins as an intracellular targeting signal).. Its function is as follows. Large tegument protein that plays multiple roles in the viral cycle. During viral entry, remains associated with the capsid while most of the tegument is detached and participates in the capsid transport toward the host nucleus. Plays a role in the routing of the capsid at the nuclear pore complex and subsequent uncoating. Within the host nucleus, acts as a deneddylase and promotes the degradation of nuclear CRLs (cullin-RING ubiquitin ligases) and thereby stabilizes nuclear CRL substrates, while cytoplasmic CRLs remain unaffected. These modifications prevent host cell cycle S-phase progression and create a favorable environment allowing efficient viral genome replication. Participates later in the secondary envelopment of capsids. Indeed, plays a linker role for the association of the outer viral tegument to the capsids together with the inner tegument protein. This Equus caballus (Horse) protein is Large tegument protein deneddylase.